The chain runs to 4134 residues: DNA-dependent protein kinase catalytic subunit (4134 aa).

3 HEAT repeats span residues 900–937 (VIYL…VAYM), 1000–1036 (QDTV…LKWS), and 1050–1085 (ANTK…YREF). TPR repeat units follow at residues 1265-1305 (YNTF…HDIH) and 1722-1755 (PMSS…SQSP). At serine 2055 the chain carries Phosphoserine; by autocatalysis. The TPR 3 repeat unit spans residues 2207–2240 (DEILANRLLEFLMKNAFHQKRAVFRHNLEIIKTV). Residue threonine 2609 is modified to Phosphothreonine; by autocatalysis. Polar residues predominate over residues 2611 to 2629 (ASQSTNRNSSQERSLSISG). Residues 2611–2631 (ASQSTNRNSSQERSLSISGSV) form a disordered region. A Phosphoserine; by autocatalysis modification is found at serine 2612. Phosphothreonine; by autocatalysis is present on residues threonine 2638 and threonine 2647. An FAT domain is found at 2880–3545 (NVSTSCLASL…IYPFTISSES (666 aa)). Positions 3728–4059 (FDERIMVLES…VSYVKRKLTG (332 aa)) constitute a PI3K/PI4K catalytic domain. The segment at 3734–3740 (VLESLRK) is G-loop. A catalytic loop region spans residues 3925-3933 (GIGDRHLSN). Residues 3945 to 3970 (GIDFGHAFGSATQFLPVPELMPFRLT) are activation loop. The FATC domain maps to 4102–4134 (DRLSEETQVRCLIDQATDPNLLGRVWEGWEPWM).

The protein belongs to the PI3/PI4-kinase family. As to quaternary structure, DNA-PK is a heterotrimer of PRKDC and the Ku dimer (composed of XRCC6/Ku70 and XRCC5/Ku86). Component of the core long-range non-homologous end joining (NHEJ) complex (also named DNA-PK complex) composed of PRKDC, LIG4, XRCC4, XRCC6/Ku70, XRCC5/Ku86 and NHEJ1/XLF. Additional component of the NHEJ complex includes PAXX. Following autophosphorylation, PRKDC dissociates from DNA. Autophosphorylated at two clusters, the T2609 cluster and the S2056 cluster. Autophosphorylated on Ser-2055, Thr-2609, Thr-2638 and Thr-2647. Ser-2055 and Thr-2609 are DNA damage-inducible phosphorylation sites (inducible with ionizing radiation, IR) dephosphorylated by PPP5C. Autophosphorylation induces a conformational change that leads to remodeling of the DNA-PK complex, requisite for efficient end processing and DNA repair. Autophosphorylation in trans within DNA-PK complexes loaded on DNA ends leads to the dissociation of PRKDC from DNA and the transition into the short-range NHEJ complex. Autophosphorylation of the T2609 cluster is required for hematopoietic development and protein synthesis in erythrocytes precursors.

The protein localises to the nucleus. It is found in the nucleolus. The enzyme catalyses L-seryl-[protein] + ATP = O-phospho-L-seryl-[protein] + ADP + H(+). It catalyses the reaction L-threonyl-[protein] + ATP = O-phospho-L-threonyl-[protein] + ADP + H(+). Its function is as follows. Serine/threonine-protein kinase that acts as a molecular sensor for DNA damage. Involved in DNA nonhomologous end joining (NHEJ) required for double-strand break (DSB) repair and V(D)J recombination. Must be bound to DNA to express its catalytic properties. Promotes processing of hairpin DNA structures in V(D)J recombination by activation of the hairpin endonuclease artemis (DCLRE1C). Recruited by XRCC5 and XRCC6 to DNA ends and is required to (1) protect and align broken ends of DNA, thereby preventing their degradation, (2) and sequester the DSB for repair by NHEJ. Acts as a scaffold protein to aid the localization of DNA repair proteins to the site of damage. The assembly of the DNA-PK complex at DNA ends is also required for the NHEJ ligation step. Found at the ends of chromosomes, suggesting a further role in the maintenance of telomeric stability and the prevention of chromosomal end fusion. As part of the DNA-PK complex, involved in the early steps of ribosome assembly by promoting the processing of precursor rRNA into mature 18S rRNA in the small-subunit processome. Recognizes the substrate consensus sequence [ST]-Q. Phosphorylates 'Ser-139' of histone variant H2AX, thereby regulating DNA damage response mechanism. In Gallus gallus (Chicken), this protein is DNA-dependent protein kinase catalytic subunit (PRKDC).